The chain runs to 309 residues: Ribonuclease Z (309 aa).

Positions 63, 65, 67, 68, 145, 216, and 274 each coordinate Zn(2+). The Proton acceptor role is filled by Asp67.

It belongs to the RNase Z family. As to quaternary structure, homodimer. The cofactor is Zn(2+).

The catalysed reaction is Endonucleolytic cleavage of RNA, removing extra 3' nucleotides from tRNA precursor, generating 3' termini of tRNAs. A 3'-hydroxy group is left at the tRNA terminus and a 5'-phosphoryl group is left at the trailer molecule.. Its function is as follows. Zinc phosphodiesterase, which displays some tRNA 3'-processing endonuclease activity. Probably involved in tRNA maturation, by removing a 3'-trailer from precursor tRNA. The protein is Ribonuclease Z of Streptococcus agalactiae serotype Ia (strain ATCC 27591 / A909 / CDC SS700).